We begin with the raw amino-acid sequence, 220 residues long: UPF0758 protein CKO_05095 (220 aa).

One can recognise an MPN domain in the interval 98–220; the sequence is ALLSPEMTRE…YVSFAERGWI (123 aa). His-169, His-171, and Asp-182 together coordinate Zn(2+). The JAMM motif motif lies at 169–182; sequence HNHPSGCAEPSKAD.

This sequence belongs to the UPF0758 family. YicR subfamily.

The chain is UPF0758 protein CKO_05095 from Citrobacter koseri (strain ATCC BAA-895 / CDC 4225-83 / SGSC4696).